The primary structure comprises 344 residues: Uroporphyrinogen decarboxylase (344 aa).

Residues 27–31 (RQAGR), phenylalanine 46, aspartate 76, tyrosine 151, serine 206, and histidine 319 contribute to the substrate site.

Belongs to the uroporphyrinogen decarboxylase family. As to quaternary structure, homodimer.

It is found in the cytoplasm. It catalyses the reaction uroporphyrinogen III + 4 H(+) = coproporphyrinogen III + 4 CO2. The protein operates within porphyrin-containing compound metabolism; protoporphyrin-IX biosynthesis; coproporphyrinogen-III from 5-aminolevulinate: step 4/4. Functionally, catalyzes the decarboxylation of four acetate groups of uroporphyrinogen-III to yield coproporphyrinogen-III. This Halalkalibacterium halodurans (strain ATCC BAA-125 / DSM 18197 / FERM 7344 / JCM 9153 / C-125) (Bacillus halodurans) protein is Uroporphyrinogen decarboxylase.